We begin with the raw amino-acid sequence, 332 residues long: Ketol-acid reductoisomerase (NADP(+)) 2 (332 aa).

One can recognise a KARI N-terminal Rossmann domain in the interval 2–182; it reads AELFYDADAD…GGTRAGVIRT (181 aa). NADP(+) is bound by residues 25–28, Ser51, Ser53, and 83–86; these read YGSQ and DPIQ. The active site involves His108. Gly134 lines the NADP(+) pocket. The 146-residue stretch at 183–328 folds into the KARI C-terminal knotted domain; it reads TFTEETETDL…KELRKLMSWV (146 aa). The Mg(2+) site is built by Asp191, Glu195, Glu227, and Glu231. Ser252 provides a ligand contact to substrate.

It belongs to the ketol-acid reductoisomerase family. Mg(2+) is required as a cofactor.

It carries out the reaction (2R)-2,3-dihydroxy-3-methylbutanoate + NADP(+) = (2S)-2-acetolactate + NADPH + H(+). The catalysed reaction is (2R,3R)-2,3-dihydroxy-3-methylpentanoate + NADP(+) = (S)-2-ethyl-2-hydroxy-3-oxobutanoate + NADPH + H(+). It functions in the pathway amino-acid biosynthesis; L-isoleucine biosynthesis; L-isoleucine from 2-oxobutanoate: step 2/4. Its pathway is amino-acid biosynthesis; L-valine biosynthesis; L-valine from pyruvate: step 2/4. Functionally, involved in the biosynthesis of branched-chain amino acids (BCAA). Catalyzes an alkyl-migration followed by a ketol-acid reduction of (S)-2-acetolactate (S2AL) to yield (R)-2,3-dihydroxy-isovalerate. In the isomerase reaction, S2AL is rearranged via a Mg-dependent methyl migration to produce 3-hydroxy-3-methyl-2-ketobutyrate (HMKB). In the reductase reaction, this 2-ketoacid undergoes a metal-dependent reduction by NADPH to yield (R)-2,3-dihydroxy-isovalerate. This chain is Ketol-acid reductoisomerase (NADP(+)) 2, found in Streptomyces coelicolor (strain ATCC BAA-471 / A3(2) / M145).